The sequence spans 183 residues: Transmembrane and coiled-coil domain-containing protein 2 (183 aa).

A helical transmembrane segment spans residues 54 to 74 (VQIILGISFLTLLAIGLFALW). Residues 127–150 (GLQEKILKKLQMVENKVRDLEGII) are a coiled coil.

It localises to the membrane. The polypeptide is Transmembrane and coiled-coil domain-containing protein 2 (Tmco2) (Mus musculus (Mouse)).